Here is a 155-residue protein sequence, read N- to C-terminus: Large ribosomal subunit protein bL9c (155 aa).

It belongs to the bacterial ribosomal protein bL9 family.

Its subcellular location is the plastid. The protein resides in the chloroplast. Binds to the 23S rRNA. The sequence is that of Large ribosomal subunit protein bL9c from Porphyra purpurea (Red seaweed).